We begin with the raw amino-acid sequence, 150 residues long: Cytochrome c oxidase subunit 5A, mitochondrial (150 aa).

Residues 1–41 constitute a mitochondrion transit peptide; the sequence is MLGAALRRCAVAATSRAGPRGLLHSAPNPGPAAAIQSVRCY. An SIFI-degron motif is present at residues 2-17; that stretch reads LGAALRRCAVAATSRA. Residues Lys87 and Lys113 each carry the N6-acetyllysine modification. The residue at position 141 (Thr141) is a Phosphothreonine.

The protein belongs to the cytochrome c oxidase subunit 5A family. As to quaternary structure, component of the cytochrome c oxidase (complex IV, CIV), a multisubunit enzyme composed of 14 subunits. The complex is composed of a catalytic core of 3 subunits MT-CO1, MT-CO2 and MT-CO3, encoded in the mitochondrial DNA, and 11 supernumerary subunits COX4I, COX5A, COX5B, COX6A, COX6B, COX6C, COX7A, COX7B, COX7C, COX8 and NDUFA4, which are encoded in the nuclear genome. The complex exists as a monomer or a dimer and forms supercomplexes (SCs) in the inner mitochondrial membrane with NADH-ubiquinone oxidoreductase (complex I, CI) and ubiquinol-cytochrome c oxidoreductase (cytochrome b-c1 complex, complex III, CIII), resulting in different assemblies (supercomplex SCI(1)III(2)IV(1) and megacomplex MCI(2)III(2)IV(2)). Interacts with AFG1L. Interacts with RAB5IF. In terms of processing, in response to mitochondrial stress, the precursor protein is ubiquitinated by the SIFI complex in the cytoplasm before mitochondrial import, leading to its degradation. Within the SIFI complex, UBR4 initiates ubiquitin chain that are further elongated or branched by KCMF1.

It is found in the mitochondrion inner membrane. It functions in the pathway energy metabolism; oxidative phosphorylation. Component of the cytochrome c oxidase, the last enzyme in the mitochondrial electron transport chain which drives oxidative phosphorylation. The respiratory chain contains 3 multisubunit complexes succinate dehydrogenase (complex II, CII), ubiquinol-cytochrome c oxidoreductase (cytochrome b-c1 complex, complex III, CIII) and cytochrome c oxidase (complex IV, CIV), that cooperate to transfer electrons derived from NADH and succinate to molecular oxygen, creating an electrochemical gradient over the inner membrane that drives transmembrane transport and the ATP synthase. Cytochrome c oxidase is the component of the respiratory chain that catalyzes the reduction of oxygen to water. Electrons originating from reduced cytochrome c in the intermembrane space (IMS) are transferred via the dinuclear copper A center (CU(A)) of subunit 2 and heme A of subunit 1 to the active site in subunit 1, a binuclear center (BNC) formed by heme A3 and copper B (CU(B)). The BNC reduces molecular oxygen to 2 water molecules using 4 electrons from cytochrome c in the IMS and 4 protons from the mitochondrial matrix. The protein is Cytochrome c oxidase subunit 5A, mitochondrial (COX5A) of Saguinus labiatus (Red-chested mustached tamarin).